We begin with the raw amino-acid sequence, 426 residues long: Serine--tRNA ligase (426 aa).

Thr233–Glu235 provides a ligand contact to L-serine. ATP is bound at residue Arg264 to Glu266. Residue Glu287 participates in L-serine binding. Glu351–Ser354 is an ATP binding site. Residue Ser387 participates in L-serine binding.

This sequence belongs to the class-II aminoacyl-tRNA synthetase family. Type-1 seryl-tRNA synthetase subfamily. In terms of assembly, homodimer. The tRNA molecule binds across the dimer.

Its subcellular location is the cytoplasm. It carries out the reaction tRNA(Ser) + L-serine + ATP = L-seryl-tRNA(Ser) + AMP + diphosphate + H(+). The enzyme catalyses tRNA(Sec) + L-serine + ATP = L-seryl-tRNA(Sec) + AMP + diphosphate + H(+). Its pathway is aminoacyl-tRNA biosynthesis; selenocysteinyl-tRNA(Sec) biosynthesis; L-seryl-tRNA(Sec) from L-serine and tRNA(Sec): step 1/1. Catalyzes the attachment of serine to tRNA(Ser). Is also able to aminoacylate tRNA(Sec) with serine, to form the misacylated tRNA L-seryl-tRNA(Sec), which will be further converted into selenocysteinyl-tRNA(Sec). This is Serine--tRNA ligase from Pseudomonas putida (strain ATCC 700007 / DSM 6899 / JCM 31910 / BCRC 17059 / LMG 24140 / F1).